A 169-amino-acid chain; its full sequence is Phosphopantetheine adenylyltransferase (169 aa).

Thr14 is a binding site for substrate. ATP contacts are provided by residues 14 to 15 and His22; that span reads TF. Substrate contacts are provided by Lys46, Leu78, and Arg92. Residues 93 to 95, Glu103, and 128 to 134 contribute to the ATP site; these read GLR and HSFISSS.

Belongs to the bacterial CoaD family. As to quaternary structure, homohexamer. It depends on Mg(2+) as a cofactor.

The protein resides in the cytoplasm. It catalyses the reaction (R)-4'-phosphopantetheine + ATP + H(+) = 3'-dephospho-CoA + diphosphate. Its pathway is cofactor biosynthesis; coenzyme A biosynthesis; CoA from (R)-pantothenate: step 4/5. Reversibly transfers an adenylyl group from ATP to 4'-phosphopantetheine, yielding dephospho-CoA (dPCoA) and pyrophosphate. The polypeptide is Phosphopantetheine adenylyltransferase (Stenotrophomonas maltophilia (strain K279a)).